A 431-amino-acid polypeptide reads, in one-letter code: Glutamyl-tRNA reductase (431 aa).

Substrate contacts are provided by residues 49–52, Ser109, 114–116, and Gln120; these read TCDR and EPH. Cys50 acts as the Nucleophile in catalysis. Residue 189-194 coordinates NADP(+); it reads GTQEMG.

This sequence belongs to the glutamyl-tRNA reductase family. As to quaternary structure, homodimer.

The catalysed reaction is (S)-4-amino-5-oxopentanoate + tRNA(Glu) + NADP(+) = L-glutamyl-tRNA(Glu) + NADPH + H(+). The protein operates within porphyrin-containing compound metabolism; protoporphyrin-IX biosynthesis; 5-aminolevulinate from L-glutamyl-tRNA(Glu): step 1/2. It functions in the pathway porphyrin-containing compound metabolism; chlorophyll biosynthesis. Catalyzes the NADPH-dependent reduction of glutamyl-tRNA(Glu) to glutamate 1-semialdehyde (GSA). The polypeptide is Glutamyl-tRNA reductase (Rhodospirillum rubrum (strain ATCC 11170 / ATH 1.1.1 / DSM 467 / LMG 4362 / NCIMB 8255 / S1)).